The primary structure comprises 795 residues: ATP-dependent RNA helicase DHX15 (795 aa).

A disordered region spans residues 1-108 (MSKRHRLDLG…HSTHAGHAGH (108 aa)). Phosphoserine is present on Ser15. The span at 20-62 (AGTDGKDRDRDRDREDRSKDRDRERDRGDREREREKEKEKELR) shows a compositional bias: basic and acidic residues. Low complexity predominate over residues 79-108 (ASHSAHSTHSAHSTHSTHSAHSTHAGHAGH). Residues 147-313 (TDILVRHQSF…FDNCPLLTIP (167 aa)) form the Helicase ATP-binding domain. Position 160 to 167 (160 to 167 (GETGSGKT)) interacts with ATP. The short motif at 260-263 (DEAH) is the DEAH box element. In terms of domain architecture, Helicase C-terminal spans 338–518 (TVIQIHMCEE…SVVLQLKKLG (181 aa)). Residue Lys488 is modified to N6-acetyllysine. Residue Lys786 forms a Glycyl lysine isopeptide (Lys-Gly) (interchain with G-Cter in SUMO2) linkage.

The protein belongs to the DEAD box helicase family. DEAH subfamily. DDX15/PRP43 sub-subfamily. In terms of assembly, component of the U11/U12 snRNPs that are part of the U12-type spliceosome. Identified in the Intron Large spliceosome complex (IL, also named intron lariat spliceosome), a post-mRNA release spliceosomal complex containing the excised intron, U2, U5 and U6 snRNPs, and splicing factors; the association may be transient. The IL complex exists in two distinct conformations, one with the DHX15 (ILS2) and one without (ILS1). Interacts with TFIP11 (via G-patch domain); indicative for a recruitment to the IL complex. Interacts with SSB/La. Interacts with GPATCH2 (via G-patch domain); promoting the RNA helicase activity. Interacts with NKRF (via G-patch domain); promoting the RNA helicase activity. Interacts with NLRP6. In terms of tissue distribution, ubiquitous.

It localises to the nucleus. It is found in the nucleolus. It carries out the reaction ATP + H2O = ADP + phosphate + H(+). ATPase activity is enhanced upon binding to G-patch domain-containing proteins. G-patch domain-containing proteins act like a brace that tethers mobile sections of DHX15 together, stabilizing a functional conformation with high RNA affinity, thereby promoting the ATPase activity. Functionally, RNA helicase involved in mRNA processing and antiviral innate immunity. Pre-mRNA processing factor involved in disassembly of spliceosomes after the release of mature mRNA. In cooperation with TFIP11 seem to be involved in the transition of the U2, U5 and U6 snRNP-containing IL complex to the snRNP-free IS complex leading to efficient debranching and turnover of excised introns. Plays a key role in antiviral innate immunity by promoting both MAVS-dependent signaling and NLRP6 inflammasome. Acts as an RNA virus sensor: recognizes and binds viral double stranded RNA (dsRNA) and activates the MAVS-dependent signaling to produce interferon-beta and interferon lambda-3 (IFNL3). Involved in intestinal antiviral innate immunity together with NLRP6: recognizes and binds viral dsRNA and promotes activation of the NLRP6 inflammasome in intestinal epithelial cells to restrict infection by enteric viruses. The NLRP6 inflammasome acts by promoting maturation and secretion of IL18 in the extracellular milieu. Also involved in antibacterial innate immunity by promoting Wnt-induced antimicrobial protein expression in Paneth cells. The chain is ATP-dependent RNA helicase DHX15 from Homo sapiens (Human).